A 343-amino-acid polypeptide reads, in one-letter code: Nuclear distribution protein nudE-like 1 (343 aa).

The stretch at 25 to 190 (KYKQSFQEAR…LAVRERQQEV (166 aa)) forms a coiled coil. Disordered regions lie at residues 184–204 (RERQQEVTRKSAPSSPTLDCE) and 322–343 (QGTPGLGASRPSSAPGMLPLSV).

Belongs to the nudE family. Phosphorylated in mitosis.

The protein resides in the cytoplasm. It localises to the cytoskeleton. Its subcellular location is the microtubule organizing center. The protein localises to the centrosome. It is found in the spindle. Functionally, required for organization of the cellular microtubule array and microtubule anchoring at the centrosome. Positively regulates the activity of the minus-end directed microtubule motor protein dynein. May enhance dynein-mediated microtubule sliding by targeting dynein to the microtubule plus end. Positively regulates lysosome peripheral distribution and ruffled border formation in osteoclasts. The sequence is that of Nuclear distribution protein nudE-like 1 (NDEL1) from Gallus gallus (Chicken).